We begin with the raw amino-acid sequence, 839 residues long: Lon protease (839 aa).

Residues 31 to 224 form the Lon N-terminal domain; it reads LFLIPIKSRP…KVLLFLKKEI (194 aa). An ATP-binding site is contributed by 377–384; that stretch reads GPPGVGKT. Residues 613-790 form the Lon proteolytic domain; the sequence is ASVPGTALGL…EEVALLLFDE (178 aa). Catalysis depends on residues Ser-696 and Lys-739. The disordered stretch occupies residues 807–839; the sequence is IVNPTRKLSPKKKTTQKQKLSLSKQKGNNQKKK. The span at 823-832 shows a compositional bias: low complexity; that stretch reads KQKLSLSKQK.

This sequence belongs to the peptidase S16 family. Homohexamer. Organized in a ring with a central cavity.

The protein resides in the cytoplasm. The catalysed reaction is Hydrolysis of proteins in presence of ATP.. ATP-dependent serine protease that mediates the selective degradation of mutant and abnormal proteins as well as certain short-lived regulatory proteins. Required for cellular homeostasis and for survival from DNA damage and developmental changes induced by stress. Degrades polypeptides processively to yield small peptide fragments that are 5 to 10 amino acids long. Binds to DNA in a double-stranded, site-specific manner. The protein is Lon protease of Leptospira interrogans serogroup Icterohaemorrhagiae serovar copenhageni (strain Fiocruz L1-130).